Here is a 386-residue protein sequence, read N- to C-terminus: ADP,ATP carrier protein, mitochondrial (386 aa).

Residues 1–76 constitute a mitochondrion transit peptide; that stretch reads ADNQHPTVYQ…ANASPVFVQA (76 aa). Solcar repeat units lie at residues 83–176, 188–281, and 289–375; these read AAFA…FKRL, KWFA…LKPV, and DSFF…LQVI. 5 helical membrane passes run 85–112, 153–177, 186–206, 257–278, and 292–312; these read FATD…VKLL, TANV…KRLF, YWKW…SSLL, FNIS…YDSL, and FASF…SYPI. Residues Arg158 and Lys170 each contribute to the ADP site. Arg316 lines the ADP pocket. Residues 316–321 form an important for transport activity region; that stretch reads RRRMMM. A Nucleotide carrier signature motif motif is present at residues 316 to 321; the sequence is RRRMMM. Residues 352-372 traverse the membrane as a helical segment; it reads AGANVLRAVAGAGVLAGYDKL.

The protein belongs to the mitochondrial carrier (TC 2.A.29) family. In terms of assembly, monomer.

Its subcellular location is the mitochondrion inner membrane. The enzyme catalyses ADP(in) + ATP(out) = ADP(out) + ATP(in). The matrix-open state (m-state) is inhibited by the membrane-permeable bongkrekic acid (BKA). The cytoplasmic-open state (c-state) is inhibited by the membrane-impermeable toxic inhibitor carboxyatractyloside (CATR). Its function is as follows. ADP:ATP antiporter that mediates import of ADP into the mitochondrial matrix for ATP synthesis, and export of ATP out to fuel the cell. Cycles between the cytoplasmic-open state (c-state) and the matrix-open state (m-state): operates by the alternating access mechanism with a single substrate-binding site intermittently exposed to either the cytosolic (c-state) or matrix (m-state) side of the inner mitochondrial membrane. The protein is ADP,ATP carrier protein, mitochondrial (ANT1) of Solanum tuberosum (Potato).